Reading from the N-terminus, the 266-residue chain is MMALGAAGATRVFVAMVAAALGGHPLLGVSATLNSVLNSNAIKNLPPPLGGAAGHPGSAVSAAPGILYPGGNKYQTIDNYQPYPCAEDEECGTDEYCASPTRGGDAGVQICLACRKRRKRCMRHAMCCPGNYCKNGICVSSDQNHFRGEIEETITESFGNDHSTLDGYSRRTTLSSKMYHTKGQEGSVCLRSSDCASGLCCARHFWSKICKPVLKEGQVCTKHRRKGSHGLEIFQRCYCGEGLSCRIQKDHHQASNSSRLHTCQRH.

An N-terminal signal peptide occupies residues 1–31; the sequence is MMALGAAGATRVFVAMVAAALGGHPLLGVSA. Ser-61 carries O-linked (GalNAc...) serine glycosylation. Intrachain disulfides connect Cys-85/Cys-97, Cys-91/Cys-111, Cys-114/Cys-128, Cys-121/Cys-133, Cys-127/Cys-138, Cys-189/Cys-201, Cys-195/Cys-210, Cys-200/Cys-237, Cys-220/Cys-245, and Cys-239/Cys-263. Residues 85-138 are DKK-type Cys-1; sequence CAEDEECGTDEYCASPTRGGDAGVQICLACRKRRKRCMRHAMCCPGNYCKNGIC. Residues 189 to 263 form a DKK-type Cys-2 region; sequence CLRSSDCASG…ASNSSRLHTC (75 aa). Asn-256 is a glycosylation site (N-linked (GlcNAc...) asparagine).

Belongs to the dickkopf family. Interacts with LRP6. Interacts (via the C-terminal Cys-rich domain) with LRP5 (via beta-propeller regions 3 and 4); the interaction, enhanced by MESD and or KREMEN, antagonizes Wnt-mediated signaling. Forms a ternary complex with LRP6 and KREM1. Interacts with KREM1. In terms of tissue distribution, placenta.

It localises to the secreted. In terms of biological role, antagonizes canonical Wnt signaling by inhibiting LRP5/6 interaction with Wnt and by forming a ternary complex with the transmembrane protein KREMEN that promotes internalization of LRP5/6. DKKs play an important role in vertebrate development, where they locally inhibit Wnt regulated processes such as antero-posterior axial patterning, limb development, somitogenesis and eye formation. In the adult, Dkks are implicated in bone formation and bone disease, cancer and Alzheimer disease. Inhibits the pro-apoptotic function of KREMEN1 in a Wnt-independent manner, and has anti-apoptotic activity. The polypeptide is Dickkopf-related protein 1 (DKK1) (Homo sapiens (Human)).